Here is a 313-residue protein sequence, read N- to C-terminus: Porphobilinogen deaminase (313 aa).

At cysteine 242 the chain carries S-(dipyrrolylmethanemethyl)cysteine.

Belongs to the HMBS family. In terms of assembly, monomer. Requires dipyrromethane as cofactor.

It catalyses the reaction 4 porphobilinogen + H2O = hydroxymethylbilane + 4 NH4(+). It participates in porphyrin-containing compound metabolism; protoporphyrin-IX biosynthesis; coproporphyrinogen-III from 5-aminolevulinate: step 2/4. Functionally, tetrapolymerization of the monopyrrole PBG into the hydroxymethylbilane pre-uroporphyrinogen in several discrete steps. This is Porphobilinogen deaminase from Yersinia enterocolitica serotype O:8 / biotype 1B (strain NCTC 13174 / 8081).